Here is a 242-residue protein sequence, read N- to C-terminus: Probable 2-phosphosulfolactate phosphatase (242 aa).

It belongs to the ComB family. It depends on Mg(2+) as a cofactor.

The catalysed reaction is (2R)-O-phospho-3-sulfolactate + H2O = (2R)-3-sulfolactate + phosphate. In Caldicellulosiruptor saccharolyticus (strain ATCC 43494 / DSM 8903 / Tp8T 6331), this protein is Probable 2-phosphosulfolactate phosphatase.